The chain runs to 380 residues: MAPNIRKSHPLMKIINNSLIDLPTPSNISAWWNFGSLLAVCLATQIITGLLLAAHYTADTTLAFSSVAHTCRNVQYGWLIRNLHANGASFFFICIYLHIGRGIYYGSYLYKETWNTGVILLLTLMATAFVGYVLPWGQMSFWGATVITNLFSAVPYIGQTLVEWAWGGFSVDNPTLTRFFALHFLLPFIIAGITIIHLAFLHESGSNNPLGISSNSDKIPFHPYYSLKDILGLALMITPLLTLALFSPNLLGDPENFTPANPLTTPPHIKPEWYFLFAYAILRSIPNKLGGVLALAASVFILFLIPLLHKSKQRTMTFRPLSQLLFWLLAANLFILTWIGSQPVEHPFIIIGQLASLSYFTTLLILFPIVGTLENKMLKL.

Transmembrane regions (helical) follow at residues 34–54 (FGSL…LLAA), 78–99 (WLIR…YLHI), 114–134 (WNTG…GYVL), and 179–199 (FFAL…IHLA). Heme b contacts are provided by histidine 84 and histidine 98. Residues histidine 183 and histidine 197 each contribute to the heme b site. Histidine 202 is a binding site for a ubiquinone. 4 consecutive transmembrane segments (helical) span residues 227–247 (LKDI…ALFS), 289–309 (LGGV…PLLH), 321–341 (LSQL…WIGS), and 348–368 (FIII…ILFP).

This sequence belongs to the cytochrome b family. The cytochrome bc1 complex contains 11 subunits: 3 respiratory subunits (MT-CYB, CYC1 and UQCRFS1), 2 core proteins (UQCRC1 and UQCRC2) and 6 low-molecular weight proteins (UQCRH/QCR6, UQCRB/QCR7, UQCRQ/QCR8, UQCR10/QCR9, UQCR11/QCR10 and a cleavage product of UQCRFS1). This cytochrome bc1 complex then forms a dimer. Heme b is required as a cofactor.

It is found in the mitochondrion inner membrane. Its function is as follows. Component of the ubiquinol-cytochrome c reductase complex (complex III or cytochrome b-c1 complex) that is part of the mitochondrial respiratory chain. The b-c1 complex mediates electron transfer from ubiquinol to cytochrome c. Contributes to the generation of a proton gradient across the mitochondrial membrane that is then used for ATP synthesis. This chain is Cytochrome b (MT-CYB), found in Cyrtonyx montezumae (Montezuma quail).